A 488-amino-acid polypeptide reads, in one-letter code: Malonate-semialdehyde dehydrogenase (488 aa).

The NAD(+) site is built by Ala-150, Phe-152, Lys-176, Glu-179, Arg-180, Ser-229, and Thr-251. Cys-284 (nucleophile) is an active-site residue. Residue Glu-382 participates in NAD(+) binding.

This sequence belongs to the aldehyde dehydrogenase family. IolA subfamily. In terms of assembly, homotetramer.

It carries out the reaction 3-oxopropanoate + NAD(+) + CoA + H2O = hydrogencarbonate + acetyl-CoA + NADH + H(+). The catalysed reaction is 2-methyl-3-oxopropanoate + NAD(+) + CoA + H2O = propanoyl-CoA + hydrogencarbonate + NADH + H(+). It participates in polyol metabolism; myo-inositol degradation into acetyl-CoA; acetyl-CoA from myo-inositol: step 7/7. In terms of biological role, catalyzes the oxidation of malonate semialdehyde (MSA) and methylmalonate semialdehyde (MMSA) into acetyl-CoA and propanoyl-CoA, respectively. Is involved in a myo-inositol catabolic pathway. Bicarbonate, and not CO2, is the end-product of the enzymatic reaction. The protein is Malonate-semialdehyde dehydrogenase of Listeria monocytogenes serotype 4a (strain HCC23).